A 243-amino-acid polypeptide reads, in one-letter code: Uroporphyrinogen-III C-methyltransferase (243 aa).

Residues proline 12, 88 to 90, 118 to 119, methionine 166, and alanine 195 each bind S-adenosyl-L-homocysteine; these read SGD and ST.

It belongs to the precorrin methyltransferase family.

It carries out the reaction uroporphyrinogen III + 2 S-adenosyl-L-methionine = precorrin-2 + 2 S-adenosyl-L-homocysteine + H(+). Its pathway is cofactor biosynthesis; adenosylcobalamin biosynthesis; precorrin-2 from uroporphyrinogen III: step 1/1. It participates in porphyrin-containing compound metabolism; siroheme biosynthesis; precorrin-2 from uroporphyrinogen III: step 1/1. Functionally, catalyzes the two successive C-2 and C-7 methylation reactions involved in the conversion of uroporphyrinogen III to precorrin-2 via the intermediate formation of precorrin-1. It is a step in the biosynthesis of both cobalamin (vitamin B12) and siroheme. In Synechococcus elongatus (strain ATCC 33912 / PCC 7942 / FACHB-805) (Anacystis nidulans R2), this protein is Uroporphyrinogen-III C-methyltransferase.